Here is an 815-residue protein sequence, read N- to C-terminus: (-)-kolavenyl diphosphate synthase TPS14, chloroplastic (815 aa).

Residues 1-51 constitute a chloroplast transit peptide; that stretch reads MFMSSSSSSHARRPQLSSFSYLHPPLPFPGLSFFNTRDKRVNFDSTRIICI. Residue K247 coordinates substrate. Residues D379 and D381 each contribute to the Mg(2+) site. Positions 379–382 match the DXDD motif motif; it reads DIDD. K465 serves as a coordination point for substrate.

Belongs to the terpene synthase family. Tpsc subfamily. It depends on Mg(2+) as a cofactor.

It localises to the plastid. The protein resides in the chloroplast. The enzyme catalyses (2E,6E,10E)-geranylgeranyl diphosphate = (-)-kolavenyl diphosphate. Inhibited by high concentrations of magnesium. Its function is as follows. Diterpene synthase that catalyzes the formation of (-)-kolavenyl diphosphate from geranylgeranyl diphosphate (GGPP). The sequence is that of (-)-kolavenyl diphosphate synthase TPS14, chloroplastic from Tripterygium wilfordii (Thunder God vine).